We begin with the raw amino-acid sequence, 391 residues long: Anhydro-N-acetylmuramic acid kinase (391 aa).

9–16 is an ATP binding site; the sequence is GTSVDGID.

The protein belongs to the anhydro-N-acetylmuramic acid kinase family.

The enzyme catalyses 1,6-anhydro-N-acetyl-beta-muramate + ATP + H2O = N-acetyl-D-muramate 6-phosphate + ADP + H(+). Its pathway is amino-sugar metabolism; 1,6-anhydro-N-acetylmuramate degradation. It participates in cell wall biogenesis; peptidoglycan recycling. Catalyzes the specific phosphorylation of 1,6-anhydro-N-acetylmuramic acid (anhMurNAc) with the simultaneous cleavage of the 1,6-anhydro ring, generating MurNAc-6-P. Is required for the utilization of anhMurNAc either imported from the medium or derived from its own cell wall murein, and thus plays a role in cell wall recycling. This chain is Anhydro-N-acetylmuramic acid kinase, found in Gloeothece citriformis (strain PCC 7424) (Cyanothece sp. (strain PCC 7424)).